Here is a 129-residue protein sequence, read N- to C-terminus: Small ribosomal subunit protein uS11 (129 aa).

Belongs to the universal ribosomal protein uS11 family. As to quaternary structure, part of the 30S ribosomal subunit. Interacts with proteins S7 and S18. Binds to IF-3.

Its function is as follows. Located on the platform of the 30S subunit, it bridges several disparate RNA helices of the 16S rRNA. Forms part of the Shine-Dalgarno cleft in the 70S ribosome. The polypeptide is Small ribosomal subunit protein uS11 (Staphylococcus carnosus (strain TM300)).